Consider the following 384-residue polypeptide: Succinyl-diaminopimelate desuccinylase (384 aa).

His-72 serves as a coordination point for Zn(2+). Asp-74 is an active-site residue. Asp-105 lines the Zn(2+) pocket. Glu-139 functions as the Proton acceptor in the catalytic mechanism. Residues Glu-140, Glu-168, and His-355 each contribute to the Zn(2+) site.

The protein belongs to the peptidase M20A family. DapE subfamily. Homodimer. Zn(2+) serves as cofactor. Requires Co(2+) as cofactor.

The enzyme catalyses N-succinyl-(2S,6S)-2,6-diaminopimelate + H2O = (2S,6S)-2,6-diaminopimelate + succinate. It functions in the pathway amino-acid biosynthesis; L-lysine biosynthesis via DAP pathway; LL-2,6-diaminopimelate from (S)-tetrahydrodipicolinate (succinylase route): step 3/3. In terms of biological role, catalyzes the hydrolysis of N-succinyl-L,L-diaminopimelic acid (SDAP), forming succinate and LL-2,6-diaminopimelate (DAP), an intermediate involved in the bacterial biosynthesis of lysine and meso-diaminopimelic acid, an essential component of bacterial cell walls. This Blochmanniella pennsylvanica (strain BPEN) protein is Succinyl-diaminopimelate desuccinylase.